The sequence spans 606 residues: Pentatricopeptide repeat-containing protein At1g31920 (606 aa).

PPR repeat units lie at residues 96 to 130, 131 to 165, 166 to 200, 201 to 227, 233 to 263, 268 to 298, 299 to 333, 334 to 368, and 370 to 404; these read CTFD…GNEP, DNFT…GLEA, DVFV…TAAS, WSSM…MCSE, EESG…LLRN, NIIV…MEKR, NNLT…GLEP, DHVV…GKVE, and TAEH…KNDV. The interval 405–480 is type E motif; sequence IWRTFLSQCR…TPGFSIVELK (76 aa). The segment at 481–511 is type E(+) motif; sequence GKTHRFVSQDRSHPKCKEIYKMLHQMEWQLK. Residues 512 to 606 are type DYW motif; sequence FEGYSPDLTQ…GGTCSCKDYW (95 aa).

This sequence belongs to the PPR family. PCMP-H subfamily.

The chain is Pentatricopeptide repeat-containing protein At1g31920 (PCMP-H11) from Arabidopsis thaliana (Mouse-ear cress).